A 134-amino-acid chain; its full sequence is uncharacterized protein (134 aa).

A run of 2 helical transmembrane segments spans residues 16 to 36 and 43 to 63; these read IFSF…NTKL and IAYF…IHGT.

It belongs to the plectrovirus ORF5 family.

The protein resides in the host membrane. This is an uncharacterized protein from Spiroplasma citri (SpV1).